A 261-amino-acid polypeptide reads, in one-letter code: Aquaporin-8 (261 aa).

Residues 1 to 36 (MSGETPMCSIDLSEVKAKETRMAGRFRVSWYEQYIQ) are Cytoplasmic-facing. A helical membrane pass occupies residues 37–57 (PCVVELLGSALFIFIGCLSVI). Residue cysteine 53 is modified to Cysteine persulfide. Cysteine 53 carries the post-translational modification Cysteine sulfenic acid (-SOH). The Extracellular portion of the chain corresponds to 58 to 84 (ENSPDTGLLQPALAHGLALGLIIATLG). The helical transmembrane segment at 85-105 (NISGGHFNPAVSLAVTVIGGL) threads the bilayer. An NPA 1 motif is present at residues 92–94 (NPA). Residues 106 to 107 (KT) are Cytoplasmic-facing. Residues 108–128 (MLLIPYWISQIFGGLIGAALA) form a helical membrane-spanning segment. Over 129-156 (KVVSPEERFWNASGAAFAIVQEQEQVTE) the chain is Extracellular. N-linked (GlcNAc...) asparagine glycosylation occurs at asparagine 139. A helical transmembrane segment spans residues 157–177 (ALGVEIILTILLVLAVCMGAV). The Cytoplasmic segment spans residues 178 to 183 (NEKTMG). The helical transmembrane segment at 184–204 (PLAPFSIGFSVIVDILAGGGI) threads the bilayer. Residues 205–228 (SGACMNPARAFGPAVVAGYWDFHW) lie on the Extracellular side of the membrane. An NPA 2 motif is present at residues 210–212 (NPA). A helical transmembrane segment spans residues 229-249 (IYWLGPLLAGLFVGLLIRLFI). Residues 250 to 261 (GDEKTRLILKSR) are Cytoplasmic-facing.

Belongs to the MIP/aquaporin (TC 1.A.8) family. Post-translationally, sulfenylation at Cys-53(C53-SOH) when hydrogen peroxide flows through the AQP8 channel, making it susceptible to hydrogen sulfide produced by CBS. Persulfidation at Cys-53 is required to gate AQP8 channel; under stress condition, hydrogen peroxide accumulates in the cell leading to CBS activation that produces hydrogen sulfide inducing persulfidation of oxidized Cys-53 (C53-SOH). In terms of processing, N-glycosylated.

It is found in the cell membrane. It localises to the mitochondrion inner membrane. The protein localises to the apical cell membrane. Its subcellular location is the basolateral cell membrane. The protein resides in the smooth endoplasmic reticulum membrane. It catalyses the reaction H2O(in) = H2O(out). The catalysed reaction is H2O2(out) = H2O2(in). It carries out the reaction formamide(out) = formamide(in). The enzyme catalyses methylamine(out) = methylamine(in). Its activity is regulated as follows. Reversibly gated by a two-step sulfenylation-persulfidation process in cells undergoing diverse stresses. Channel that allows the facilitated permeation of water and uncharged molecules, such as hydrogen peroxide and the neutral form of ammonia (NH3), through cellular membranes such as plasma membrane, inner mitochondrial membrane and endoplasmic reticulum membrane of several tissues. The transport of ammonia neutral form induces a parallel transport of proton, at alkaline pH when the concentration of ammonia is high. However, it is unclear whether the transport of proton takes place via the aquaporin or via an endogenous pathway. Also, may transport ammonia analogs such as formamide and methylamine, a transport favourited at basic pH due to the increase of unprotonated (neutral) form, which is expected to favor diffusion. Does not transport urea or glycerol. The water transport mechanism is mercury- and copper-sensitive and passive in response to osmotic driving forces. At the canicular plasma membrane, mediates the osmotic transport of water toward the bile canaliculus and facilitates the cAMP-induced bile canalicular water secretion, a process involved in bile formation. In addition, mediates the hydrogen peroxide release from hepatocyte mitochondria that modulates the SREBF2-mediated cholesterol synthesis and facilitates the mitochondrial ammonia uptake which is metabolized into urea, mainly under glucagon stimulation. In B cells, transports the CYBB-generated hydrogen peroxide from the external leaflet of the plasma membrane to the cytosol to promote B cell activation and differentiation for signal amplification. In the small intestine and colon system, mediates water transport through mitochondria and apical membrane of epithelial cells. May play an important role in the adaptive response of proximal tubule cells to acidosis possibly facilitating mitochondrial ammonia transport. This is Aquaporin-8 from Notomys alexis (Spinifex hopping mouse).